A 254-amino-acid polypeptide reads, in one-letter code: 5'-nucleotidase SurE (254 aa).

A divalent metal cation is bound by residues Asp8, Asp9, Ser40, and Asn93.

It belongs to the SurE nucleotidase family. Requires a divalent metal cation as cofactor.

It is found in the cytoplasm. The enzyme catalyses a ribonucleoside 5'-phosphate + H2O = a ribonucleoside + phosphate. In terms of biological role, nucleotidase that shows phosphatase activity on nucleoside 5'-monophosphates. This Methylobacterium radiotolerans (strain ATCC 27329 / DSM 1819 / JCM 2831 / NBRC 15690 / NCIMB 10815 / 0-1) protein is 5'-nucleotidase SurE.